A 246-amino-acid chain; its full sequence is 1-(5-phosphoribosyl)-5-[(5-phosphoribosylamino)methylideneamino] imidazole-4-carboxamide isomerase (246 aa).

D10 acts as the Proton acceptor in catalysis. The active-site Proton donor is the D135.

This sequence belongs to the HisA/HisF family.

It is found in the cytoplasm. The enzyme catalyses 1-(5-phospho-beta-D-ribosyl)-5-[(5-phospho-beta-D-ribosylamino)methylideneamino]imidazole-4-carboxamide = 5-[(5-phospho-1-deoxy-D-ribulos-1-ylimino)methylamino]-1-(5-phospho-beta-D-ribosyl)imidazole-4-carboxamide. It participates in amino-acid biosynthesis; L-histidine biosynthesis; L-histidine from 5-phospho-alpha-D-ribose 1-diphosphate: step 4/9. This chain is 1-(5-phosphoribosyl)-5-[(5-phosphoribosylamino)methylideneamino] imidazole-4-carboxamide isomerase, found in Methanococcoides burtonii (strain DSM 6242 / NBRC 107633 / OCM 468 / ACE-M).